Consider the following 398-residue polypeptide: Phosphoglycerate kinase (398 aa).

Residues 21 to 23 (DFN), arginine 36, 59 to 62 (HLGR), arginine 119, and arginine 157 contribute to the substrate site. ATP contacts are provided by residues lysine 208, glycine 296, glutamate 327, and 354–357 (GGDS).

The protein belongs to the phosphoglycerate kinase family. In terms of assembly, monomer.

Its subcellular location is the cytoplasm. It carries out the reaction (2R)-3-phosphoglycerate + ATP = (2R)-3-phospho-glyceroyl phosphate + ADP. The protein operates within carbohydrate degradation; glycolysis; pyruvate from D-glyceraldehyde 3-phosphate: step 2/5. In Streptococcus agalactiae serotype Ia (strain ATCC 27591 / A909 / CDC SS700), this protein is Phosphoglycerate kinase.